We begin with the raw amino-acid sequence, 245 residues long: 1-(5-phosphoribosyl)-5-[(5-phosphoribosylamino)methylideneamino] imidazole-4-carboxamide isomerase (245 aa).

The active-site Proton acceptor is the D7. The active-site Proton donor is the D129.

Belongs to the HisA/HisF family.

It is found in the cytoplasm. It catalyses the reaction 1-(5-phospho-beta-D-ribosyl)-5-[(5-phospho-beta-D-ribosylamino)methylideneamino]imidazole-4-carboxamide = 5-[(5-phospho-1-deoxy-D-ribulos-1-ylimino)methylamino]-1-(5-phospho-beta-D-ribosyl)imidazole-4-carboxamide. It participates in amino-acid biosynthesis; L-histidine biosynthesis; L-histidine from 5-phospho-alpha-D-ribose 1-diphosphate: step 4/9. The protein is 1-(5-phosphoribosyl)-5-[(5-phosphoribosylamino)methylideneamino] imidazole-4-carboxamide isomerase of Shewanella sp. (strain MR-7).